A 101-amino-acid polypeptide reads, in one-letter code: Small ribosomal subunit protein uS10 (101 aa).

This sequence belongs to the universal ribosomal protein uS10 family. In terms of assembly, part of the 30S ribosomal subunit.

Its function is as follows. Involved in the binding of tRNA to the ribosomes. In Phocaeicola vulgatus (strain ATCC 8482 / DSM 1447 / JCM 5826 / CCUG 4940 / NBRC 14291 / NCTC 11154) (Bacteroides vulgatus), this protein is Small ribosomal subunit protein uS10.